We begin with the raw amino-acid sequence, 234 residues long: 5'-methylthioadenosine/S-adenosylhomocysteine nucleosidase (234 aa).

Glu-12 acts as the Proton acceptor in catalysis. Substrate-binding positions include Gly-78, Ile-152, and 173–174; that span reads ME. Asp-197 (proton donor) is an active-site residue.

Belongs to the PNP/UDP phosphorylase family. MtnN subfamily.

It carries out the reaction S-adenosyl-L-homocysteine + H2O = S-(5-deoxy-D-ribos-5-yl)-L-homocysteine + adenine. It catalyses the reaction S-methyl-5'-thioadenosine + H2O = 5-(methylsulfanyl)-D-ribose + adenine. The enzyme catalyses 5'-deoxyadenosine + H2O = 5-deoxy-D-ribose + adenine. It functions in the pathway amino-acid biosynthesis; L-methionine biosynthesis via salvage pathway; S-methyl-5-thio-alpha-D-ribose 1-phosphate from S-methyl-5'-thioadenosine (hydrolase route): step 1/2. Catalyzes the irreversible cleavage of the glycosidic bond in both 5'-methylthioadenosine (MTA) and S-adenosylhomocysteine (SAH/AdoHcy) to adenine and the corresponding thioribose, 5'-methylthioribose and S-ribosylhomocysteine, respectively. Also cleaves 5'-deoxyadenosine, a toxic by-product of radical S-adenosylmethionine (SAM) enzymes, into 5-deoxyribose and adenine. The polypeptide is 5'-methylthioadenosine/S-adenosylhomocysteine nucleosidase (Desulfotalea psychrophila (strain LSv54 / DSM 12343)).